A 539-amino-acid polypeptide reads, in one-letter code: GMP synthase [glutamine-hydrolyzing] (539 aa).

One can recognise a Glutamine amidotransferase type-1 domain in the interval 4–202 (KILILDFGSQ…VLQIAGAKPD (199 aa)). The active-site Nucleophile is cysteine 81. Active-site residues include histidine 176 and glutamate 178. Positions 203 to 395 (WIMKNHIEEA…LGLPPEMVYR (193 aa)) constitute a GMPS ATP-PPase domain. 230–236 (SGGVDSS) provides a ligand contact to ATP.

In terms of assembly, homodimer.

The catalysed reaction is XMP + L-glutamine + ATP + H2O = GMP + L-glutamate + AMP + diphosphate + 2 H(+). It functions in the pathway purine metabolism; GMP biosynthesis; GMP from XMP (L-Gln route): step 1/1. Catalyzes the synthesis of GMP from XMP. This is GMP synthase [glutamine-hydrolyzing] from Burkholderia orbicola (strain AU 1054).